The sequence spans 323 residues: uncharacterized protein (323 aa).

2 disordered regions span residues Ala185 to Trp214 and Gly271 to Leu294.

The protein belongs to the IGBP1/TAP42 family.

This is an uncharacterized protein from Schizosaccharomyces pombe (strain 972 / ATCC 24843) (Fission yeast).